A 746-amino-acid polypeptide reads, in one-letter code: Polyribonucleotide nucleotidyltransferase (746 aa).

Mg(2+) contacts are provided by aspartate 490 and aspartate 496. One can recognise a KH domain in the interval 557–619; sequence PRIETMIIGK…ATIDAAVKAI (63 aa). In terms of domain architecture, S1 motif spans 629-699; it reads GEVYEGKISS…KTGKFKLSRK (71 aa). The interval 701-746 is disordered; it reads LLPKPEGYEERPPRPERGERGPRQDRGDRGPRQDRGDRGPRREYRD. Residues 706–746 show a composition bias toward basic and acidic residues; that stretch reads EGYEERPPRPERGERGPRQDRGDRGPRQDRGDRGPRREYRD.

Belongs to the polyribonucleotide nucleotidyltransferase family. Mg(2+) is required as a cofactor.

It localises to the cytoplasm. It catalyses the reaction RNA(n+1) + phosphate = RNA(n) + a ribonucleoside 5'-diphosphate. Involved in mRNA degradation. Catalyzes the phosphorolysis of single-stranded polyribonucleotides processively in the 3'- to 5'-direction. This chain is Polyribonucleotide nucleotidyltransferase, found in Parabacteroides distasonis (strain ATCC 8503 / DSM 20701 / CIP 104284 / JCM 5825 / NCTC 11152).